Consider the following 352-residue polypeptide: MVLSLQTLAKKVLAGQRPTKCHPHFLKCYGLWWHNGPMIFDQNQKKIWSPIFTDGVHINAALVKAAAENNYDLIKLFTEWGANIDYSLLSVNTERTRDLCRELGAKEQLKQEEVLYYFNTIKRNLTSSNIILCHEVFSHNPILETINRTKLRGIIYEQLEALMENTDILSELLTKYWYGIAIEFNLTKAIHYFYQRYVHLHQWRLMYALFYNNVCDLHELYAKEKIRMDMDEMLKWACRKNYNYLTIYYCCIVLGADINQAMFHSIQFYNIGNMFFCIDLGANAIEEGKTLALQKDKSFIASLLSINCYSMNDSLSLKETDPEVIKRMLKDYHSKNMSIAHKYYIKHGFNDI.

The protein belongs to the asfivirus MGF 360 family. In terms of assembly, interacts with host STAT1; this interaction mediates STAT1 degradation through apoptosis. Interacts with host STAT2; this interaction mediates STAT2 degradation through the proteasome.

The protein localises to the host cytoplasm. Its function is as follows. Plays a role in virus cell tropism, and may be required for efficient virus replication in macrophages. In addition, inhibits IFN-beta-induced IFN-stimulated genes (ISGs) transcription. Mechanistically, degrades host STAT1 and STAT2 through apoptosis and ubiquitin-proteasome pathways respectively. The chain is Protein MGF 360-9L from Ornithodoros (relapsing fever ticks).